Here is a 156-residue protein sequence, read N- to C-terminus: Small ribosomal subunit protein uS7 (156 aa).

The protein belongs to the universal ribosomal protein uS7 family. As to quaternary structure, part of the 30S ribosomal subunit. Contacts proteins S9 and S11.

Functionally, one of the primary rRNA binding proteins, it binds directly to 16S rRNA where it nucleates assembly of the head domain of the 30S subunit. Is located at the subunit interface close to the decoding center, probably blocks exit of the E-site tRNA. The protein is Small ribosomal subunit protein uS7 of Carsonella ruddii.